The sequence spans 74 residues: Protein kish-B (74 aa).

Positions 1 to 22 are cleaved as a signal peptide; it reads MTNVYSLDGLLVFALLFVCTCA. Residues 23–52 lie on the Extracellular side of the membrane; that stretch reads YFRKVPRLRSWLLSEKKGVWGVFYKAAVIG. The chain crosses the membrane as a helical span at residues 53–73; sequence SRLHLAVSISCIAMAFYVLFI. A topological domain (cytoplasmic) is located at residue lysine 74.

The protein belongs to the KISH family.

It localises to the golgi apparatus membrane. Its function is as follows. Involved in the early part of the secretory pathway. The chain is Protein kish-B (tmem167b) from Xenopus laevis (African clawed frog).